The chain runs to 274 residues: Rhamnulose-1-phosphate aldolase (274 aa).

Glu117 is a catalytic residue. His141, His143, and His212 together coordinate Zn(2+).

Belongs to the aldolase class II family. RhaD subfamily. In terms of assembly, homotetramer. Zn(2+) serves as cofactor.

The protein localises to the cytoplasm. The catalysed reaction is L-rhamnulose 1-phosphate = (S)-lactaldehyde + dihydroxyacetone phosphate. Its pathway is carbohydrate degradation; L-rhamnose degradation; glycerone phosphate from L-rhamnose: step 3/3. In terms of biological role, catalyzes the reversible cleavage of L-rhamnulose-1-phosphate to dihydroxyacetone phosphate (DHAP) and L-lactaldehyde. In Escherichia coli (strain SMS-3-5 / SECEC), this protein is Rhamnulose-1-phosphate aldolase.